The following is a 351-amino-acid chain: Calcium release-activated calcium channel protein 1 (351 aa).

The segment covering 1–21 (MSVWTTANNSGLETPTKSPIT) has biased composition (polar residues). 2 disordered regions span residues 1 to 39 (MSVW…TGNH) and 71 to 141 (HAHP…EDLH). At 1 to 163 (MSVWTTANNS…SRAKLKASSK (163 aa)) the chain is on the cytoplasmic side. Composition is skewed to low complexity over residues 22 to 33 (SSVPRAARSSAV) and 80 to 93 (SNSP…SNNS). Residues 94-106 (AGFQRTSISNSLL) are compositionally biased toward polar residues. A helical membrane pass occupies residues 164-181 (TSALLSGFAMVAMVEVQL). The Extracellular portion of the chain corresponds to 182–191 (DHDTNVPPGM). Residues 192-212 (LIAFAICTTLLVAVHMLALMI) traverse the membrane as a helical segment. Residues 213–248 (STCILPNIETVCNLHSISLVHESPHERLHWYIETAW) are Cytoplasmic-facing. A helical transmembrane segment spans residues 249–269 (AFSTLLGLILFLLEIAILCWV). The Extracellular segment spans residues 270-277 (KFYDLSPP). Residues 278–298 (AAWSACVVLIPVMIIFMAFAI) form a helical membrane-spanning segment. Residues 299-351 (HFYRSLVSHKYEVTVSGIRELEMLKEQMEQDHLEHHNNIRNNGMNYGASGDIV) are Cytoplasmic-facing.

Belongs to the Orai family. As to quaternary structure, hexamer.

The protein localises to the cell membrane. It catalyses the reaction Ca(2+)(in) = Ca(2+)(out). Pore-forming subunit of inward rectifying Ca(2+) release-activated Ca(2+) (CRAC) channels. Assembles in hexameric CRAC channels that mediate Ca(2+) influx upon depletion of endoplasmic reticulum Ca(2+) store and channel activation by Ca(2+) sensor Stim, a process known as store-operated Ca(2+) entry (SOCE). Regulates transcription factor NFAT nuclear import. This is Calcium release-activated calcium channel protein 1 from Drosophila melanogaster (Fruit fly).